A 474-amino-acid chain; its full sequence is Microtubule protein alp7 (474 aa).

Positions 1–20 are enriched in low complexity; that stretch reads MSDIVSSSTDYSRRSPSSSS. Disordered regions lie at residues 1–79, 93–114, and 164–223; these read MSDI…DTLN, KSFD…LSQH, and SLQT…NSTQ. Ser-17 carries the phosphoserine modification. Residues 25 to 36 are compositionally biased toward basic and acidic residues; the sequence is ETDHTGFHEKRQ. A compositionally biased stretch (polar residues) spans 66–76; it reads SKPNPQLNLKD. Composition is skewed to polar residues over residues 177-189 and 201-223; these read SNGS…NTAP and RNSA…NSTQ. Coiled coils occupy residues 219 to 273 and 367 to 471; these read INST…QLRS and KISN…LNLE.

As to quaternary structure, interacts with alp14.

The protein localises to the nucleus. It is found in the cytoplasm. Its subcellular location is the cytoskeleton. It localises to the spindle. The protein resides in the chromosome. The protein localises to the centromere. It is found in the kinetochore. Required for bipolar spindle formation and proper chromosome segregation. Has an indirect role in connecting the kinetochores and the plus end of pole to chromosome microtubules by targeting alp14 to the spindle pole body. Involved in the emergence of large microtubule organizing centers (MTOC) in interphase cells. Attaches to the minus ends of microtubules and associates with the sites of microtubule attachment on the nuclear envelope. This leads to the stabilization of the microtubule bundles. The sequence is that of Microtubule protein alp7 (alp7) from Schizosaccharomyces pombe (strain 972 / ATCC 24843) (Fission yeast).